Reading from the N-terminus, the 215-residue chain is Myelin protein zero-like protein 2 (215 aa).

The first 26 residues, M1–A26, serve as a signal peptide directing secretion. An Ig-like V-type domain is found at V27–S141. Residues V27 to L154 lie on the Extracellular side of the membrane. N-linked (GlcNAc...) asparagine glycans are attached at residues N39 and N118. C47 and C123 are disulfide-bonded. A helical membrane pass occupies residues A155–F175. The Cytoplasmic segment spans residues Q176–D215.

The protein belongs to the myelin P0 protein family.

It localises to the membrane. Its function is as follows. Mediates homophilic cell-cell adhesion. The polypeptide is Myelin protein zero-like protein 2 (MPZL2) (Bos taurus (Bovine)).